Consider the following 424-residue polypeptide: MASSNLIKQLQERGLVAQVTDEEALAERLAQGPIALYCGFDPTADSLHLGHLVPLLCLKRFQQAGHKPVALVGGATGLIGDPSFKAAERKLNTEETVQEWVDKIRKQVAPFLDFDCGENSAIAANNYDWFGNMNVLTFLRDIGKHFSVNQMINKEAVKQRLNREDQGISFTEFSYNLLQGYDFACLNKQYGVVLQIGGSDQWGNITSGIDLTRRLHQNQVFGLTVPLITKADGTKFGKTEGGAVWLDPKKTSPYKFYQFWINTADADVYRFLKFFTFMSIEEINALEEEDKNSGKAPRAQYVLAEQVTRLVHGEEGLQAAKRITECLFSGSLSALSEADFEQLAQDGVPMVEMEKGADLMQALVDSELQPSRGQARKTIASNAITINGEKQSDPEYFFKEEDRLFGRFTLLRRGKKNYCLICWK.

Position 37 (tyrosine 37) interacts with L-tyrosine. The 'HIGH' region motif lies at 42–51 (PTADSLHLGH). Position 144 is an N6-acetyllysine (lysine 144). Positions 175 and 179 each coordinate L-tyrosine. Positions 235–239 (KFGKT) match the 'KMSKS' region motif. Residue lysine 238 participates in ATP binding. Positions 357 to 414 (ADLMQALVDSELQPSRGQARKTIASNAITINGEKQSDPEYFFKEEDRLFGRFTLLRRG) constitute an S4 RNA-binding domain.

It belongs to the class-I aminoacyl-tRNA synthetase family. TyrS type 1 subfamily. Homodimer.

The protein localises to the cytoplasm. The enzyme catalyses tRNA(Tyr) + L-tyrosine + ATP = L-tyrosyl-tRNA(Tyr) + AMP + diphosphate + H(+). In terms of biological role, catalyzes the attachment of tyrosine to tRNA(Tyr) in a two-step reaction: tyrosine is first activated by ATP to form Tyr-AMP and then transferred to the acceptor end of tRNA(Tyr). This is Tyrosine--tRNA ligase from Escherichia coli (strain K12 / DH10B).